The following is an 804-amino-acid chain: Leucine--tRNA ligase (804 aa).

A 'HIGH' region motif is present at residues 40–51; it reads PYPSGAGLHVGH. The 'KMSKS' region motif lies at 576–580; sequence KMSKS. K579 lines the ATP pocket.

It belongs to the class-I aminoacyl-tRNA synthetase family.

Its subcellular location is the cytoplasm. The enzyme catalyses tRNA(Leu) + L-leucine + ATP = L-leucyl-tRNA(Leu) + AMP + diphosphate. This chain is Leucine--tRNA ligase, found in Bacillus velezensis (strain DSM 23117 / BGSC 10A6 / LMG 26770 / FZB42) (Bacillus amyloliquefaciens subsp. plantarum).